The sequence spans 858 residues: M-phase phosphoprotein 8 (858 aa).

Residues 18-55 (VPDSIGRSPESEGVGAGDEEKDAATKGTVAVGDSEEDG) are disordered. Residues Ser-51, Ser-85, Ser-136, and Ser-138 each carry the phosphoserine modification. Positions 59 to 118 (FEVERILDMKCEGGKNLYKVRWKGYTSEDDTWEPEVHLEDCKEVLLEFRKKLAENKAKAV) constitute a Chromo domain. The interval 80–87 (WKGYTSED) is histone H3K9me3 binding. The interval 129–175 (NDIFEADSDSDQQSDTKEDISPRKKKKKIKCKEETSPEDLRKKRTKM) is disordered. At Thr-144 the chain carries Phosphothreonine. Phosphoserine; by CDK1 occurs at positions 149 and 164. Residues 159–169 (CKEETSPEDLR) are compositionally biased toward basic and acidic residues. Residue Ser-188 is modified to Phosphoserine. Disordered stretches follow at residues 209-234 (ELKD…NKRA) and 250-300 (NRKT…DKTA). Ser-267, Ser-271, and Ser-278 each carry phosphoserine. Positions 273 to 282 (ILEDDSEDFI) are enriched in acidic residues. Residues 283–300 (SDNREENQNVRSVRDKTA) are compositionally biased toward basic and acidic residues. At Ser-318 the chain carries Phosphoserine. The interval 321-431 (EDAGTRVRRK…YDLDKEEKAR (111 aa)) is disordered. A compositionally biased stretch (basic and acidic residues) spans 335 to 357 (RKFEEPKEIKKLESTNAFLERRA). Thr-385 carries the phosphothreonine; by CDK1 modification. Phosphoserine occurs at positions 392 and 400. Residues 407–431 (EKEKKNEPKGKYQKRYDLDKEEKAR) show a composition bias toward basic and acidic residues. Thr-453 carries the post-translational modification Phosphothreonine. ANK repeat units follow at residues 598-627 (TGMT…KVNG), 631-660 (NGTT…FVNV), 664-693 (NGET…DCNI), and 697-726 (HQNS…TLSR).

In terms of assembly, homodimer. Interacts (via chromo domain) with histone H3K9me3. Has the highest affinity for H3K9me3, and lesser affinity for H3K9me2 and H3K9me1. Component of the HUSH complex; at least composed of TASOR, PPHLN1 and MPHOSPH8. Interacts with DNMT3, EHMT1 and SETDB1. Interacts with MORC2; the interaction associateS MORC2 with the HUSH complex which recruits MORC2 to heterochromatic loci. Interacts with ZNF638; leading to recruitment of the HUSH complex to unintegrated retroviral DNA. Interacts with TASOR. Phosphorylated in M (mitotic) phase. Phosphorylation by CDK1 promotes dissociation from chromatin. In terms of tissue distribution, expressed in the spermatogonia, spermatocytes and granular cells within the cerebellum.

The protein localises to the nucleus. It is found in the chromosome. Its function is as follows. Heterochromatin component that specifically recognizes and binds methylated 'Lys-9' of histone H3 (H3K9me) and promotes recruitment of proteins that mediate epigenetic repression. Mediates recruitment of the HUSH complex to H3K9me3 sites: the HUSH complex is recruited to genomic loci rich in H3K9me3 and is required to maintain transcriptional silencing by promoting recruitment of SETDB1, a histone methyltransferase that mediates further deposition of H3K9me3, as well as MORC2. Binds H3K9me and promotes DNA methylation by recruiting DNMT3A to target CpG sites; these can be situated within the coding region of the gene. Mediates down-regulation of CDH1 expression. Also represses L1 retrotransposons in collaboration with MORC2 and, probably, SETDB1, the silencing is dependent of repressive epigenetic modifications, such as H3K9me3 mark. Silencing events often occur within introns of transcriptionally active genes, and lead to the down-regulation of host gene expression. The HUSH complex is also involved in the silencing of unintegrated retroviral DNA by being recruited by ZNF638: some part of the retroviral DNA formed immediately after infection remains unintegrated in the host genome and is transcriptionally repressed. The polypeptide is M-phase phosphoprotein 8 (Mus musculus (Mouse)).